We begin with the raw amino-acid sequence, 258 residues long: Imidazole glycerol phosphate synthase subunit HisF (258 aa).

Active-site residues include Asp-11 and Asp-130.

Belongs to the HisA/HisF family. Heterodimer of HisH and HisF.

It is found in the cytoplasm. It carries out the reaction 5-[(5-phospho-1-deoxy-D-ribulos-1-ylimino)methylamino]-1-(5-phospho-beta-D-ribosyl)imidazole-4-carboxamide + L-glutamine = D-erythro-1-(imidazol-4-yl)glycerol 3-phosphate + 5-amino-1-(5-phospho-beta-D-ribosyl)imidazole-4-carboxamide + L-glutamate + H(+). The protein operates within amino-acid biosynthesis; L-histidine biosynthesis; L-histidine from 5-phospho-alpha-D-ribose 1-diphosphate: step 5/9. In terms of biological role, IGPS catalyzes the conversion of PRFAR and glutamine to IGP, AICAR and glutamate. The HisF subunit catalyzes the cyclization activity that produces IGP and AICAR from PRFAR using the ammonia provided by the HisH subunit. In Methylorubrum populi (strain ATCC BAA-705 / NCIMB 13946 / BJ001) (Methylobacterium populi), this protein is Imidazole glycerol phosphate synthase subunit HisF.